Reading from the N-terminus, the 210-residue chain is CASP-like protein 3A2 (210 aa).

The Cytoplasmic segment spans residues 1–45 (MMMNGQKMAAAEVAVQLPESKMVTENIGGAAAAMRPFGRKAEVMN). Residues 46–66 (VLLRVLCMVTSVAALSSMVTA) form a helical membrane-spanning segment. The Extracellular portion of the chain corresponds to 67–92 (QQSSTVSIYGFMLPIQSKWSFSHSFE). A helical transmembrane segment spans residues 93 to 113 (YVVGVSAVVAAHSLLQLLISV). Over 114-128 (SRLLRKSPVIQSRSH) the chain is Cytoplasmic. A helical membrane pass occupies residues 129–149 (AWLVFAGDQVFAYAMISAGAA). The Extracellular portion of the chain corresponds to 150–178 (ASGVTNLNRTGIRHTALPNFCKPLQSFCD). Asn-157 carries an N-linked (GlcNAc...) asparagine glycan. Residues 179 to 199 (HVAVSIFFTFLSCFLLAASAV) form a helical membrane-spanning segment. Over 200 to 210 (QEVIWLSRSKY) the chain is Cytoplasmic.

The protein belongs to the Casparian strip membrane proteins (CASP) family. As to quaternary structure, homodimer and heterodimers.

Its subcellular location is the cell membrane. This is CASP-like protein 3A2 from Populus trichocarpa (Western balsam poplar).